Consider the following 133-residue polypeptide: UPF0344 protein SE_0666 (133 aa).

4 consecutive transmembrane segments (helical) span residues 1–21 (MLHV…ATYL), 42–62 (LFML…FMAA), 71–91 (MLLT…EISI), and 103–123 (FFWI…ILPW).

This sequence belongs to the UPF0344 family.

Its subcellular location is the cell membrane. In Staphylococcus epidermidis (strain ATCC 12228 / FDA PCI 1200), this protein is UPF0344 protein SE_0666.